Reading from the N-terminus, the 559-residue chain is Potassium-transporting ATPase potassium-binding subunit (559 aa).

13 helical membrane-spanning segments follow: residues 5 to 25 (GFLL…PLGS), 27 to 47 (LARL…RILW), 63 to 83 (LLAL…LLFW), 132 to 152 (GLTV…FALI), 170 to 190 (LVRI…LFFI), 253 to 273 (LAQM…FGEA), 283 to 303 (LLWA…WAEV), 327 to 347 (FGVL…CGAV), 356 to 376 (ALGG…FGGV), 379 to 399 (GLYG…LMIG), 416 to 436 (MTAL…ALAM), 484 to 504 (LLAF…MAIA), and 524 to 544 (GALF…LTFI).

The protein belongs to the KdpA family. In terms of assembly, the system is composed of three essential subunits: KdpA, KdpB and KdpC.

It localises to the cell inner membrane. Part of the high-affinity ATP-driven potassium transport (or Kdp) system, which catalyzes the hydrolysis of ATP coupled with the electrogenic transport of potassium into the cytoplasm. This subunit binds the periplasmic potassium ions and delivers the ions to the membrane domain of KdpB through an intramembrane tunnel. The protein is Potassium-transporting ATPase potassium-binding subunit of Salmonella choleraesuis (strain SC-B67).